Consider the following 1258-residue polypeptide: Serine/threonine-protein kinase Nek1 (1258 aa).

Positions 4-258 constitute a Protein kinase domain; that stretch reads YVRLQKIGEG…VNSILEKGFI (255 aa). Residues 10 to 18 and Lys33 each bind ATP; that span reads IGEGSFGKA. Residue Asp128 is the Proton acceptor of the active site. Thr156 is subject to Phosphothreonine. Thr162 is modified (phosphothreonine; by autocatalysis). The interval 330-360 is disordered; that stretch reads HEKKPLQKHKQAHQTPEKRVNTGEERRKISE. Residues 344–360 show a composition bias toward basic and acidic residues; that stretch reads TPEKRVNTGEERRKISE. 4 positions are modified to phosphoserine: Ser414, Ser418, Ser428, and Ser438. 3 disordered regions span residues 578 to 600, 648 to 669, and 685 to 704; these read KLRG…EADM, KSSD…SKQQ, and VDSS…KTNN. The span at 579 to 591 shows a compositional bias: basic and acidic residues; it reads LRGEKKEANHSEG. Phosphoserine is present on Ser653. Phosphothreonine is present on Thr661. Ser664 carries the phosphoserine modification. Basic and acidic residues predominate over residues 691–700; that stretch reads DTRETSEEMQ. 6 positions are modified to phosphoserine: Ser798, Ser834, Ser868, Ser881, Ser1052, and Ser1126. Residues 1118 to 1171 form a disordered region; it reads REQPGEEYSEEEESVLKNSDVEPTANGTDVADEDDNPSSESALNEEWHSDNSDG.

This sequence belongs to the protein kinase superfamily. NEK Ser/Thr protein kinase family. NIMA subfamily. In terms of assembly, binds to CBY2. Found in a complex with CFAP410, NEK1 and SPATA7. Interacts with CFAP410. Interacts (via Ser-1052 phosphorylated form) with 14-3-3 proteins. The cofactor is Mg(2+). As to expression, high fetal expression in the brain and kidney.

The protein localises to the nucleus. Its subcellular location is the cytoplasm. The protein resides in the cytoskeleton. It localises to the microtubule organizing center. It is found in the centrosome. It catalyses the reaction L-seryl-[protein] + ATP = O-phospho-L-seryl-[protein] + ADP + H(+). The enzyme catalyses L-threonyl-[protein] + ATP = O-phospho-L-threonyl-[protein] + ADP + H(+). Functionally, phosphorylates serines and threonines, but also appears to possess tyrosine kinase activity. Involved in DNA damage checkpoint control and for proper DNA damage repair. In response to injury that includes DNA damage, NEK1 phosphorylates VDAC1 to limit mitochondrial cell death. May be implicated in the control of meiosis. Involved in cilium assembly. In Homo sapiens (Human), this protein is Serine/threonine-protein kinase Nek1 (NEK1).